Reading from the N-terminus, the 329-residue chain is Biotin synthase (329 aa).

In terms of domain architecture, Radical SAM core spans 48–278; sequence FLGTGVDLCS…DRKIAVCGGR (231 aa). [4Fe-4S] cluster is bound by residues cysteine 66, cysteine 70, and cysteine 73. Residues serine 143 and cysteine 203 each contribute to the [2Fe-2S] cluster site.

This sequence belongs to the radical SAM superfamily. Biotin synthase family. Homodimer. [4Fe-4S] cluster is required as a cofactor. It depends on [2Fe-2S] cluster as a cofactor.

It carries out the reaction (4R,5S)-dethiobiotin + (sulfur carrier)-SH + 2 reduced [2Fe-2S]-[ferredoxin] + 2 S-adenosyl-L-methionine = (sulfur carrier)-H + biotin + 2 5'-deoxyadenosine + 2 L-methionine + 2 oxidized [2Fe-2S]-[ferredoxin]. It functions in the pathway cofactor biosynthesis; biotin biosynthesis; biotin from 7,8-diaminononanoate: step 2/2. Its function is as follows. Catalyzes the conversion of dethiobiotin (DTB) to biotin by the insertion of a sulfur atom into dethiobiotin via a radical-based mechanism. In Geobacter sulfurreducens (strain ATCC 51573 / DSM 12127 / PCA), this protein is Biotin synthase.